A 376-amino-acid polypeptide reads, in one-letter code: 23S rRNA (uracil(747)-C(5))-methyltransferase RlmC (376 aa).

The [4Fe-4S] cluster site is built by Cys-3, Cys-11, Cys-14, and Cys-87. S-adenosyl-L-methionine contacts are provided by Gln-212, Phe-241, Glu-262, and Asn-307. Cys-334 functions as the Nucleophile in the catalytic mechanism.

Belongs to the class I-like SAM-binding methyltransferase superfamily. RNA M5U methyltransferase family. RlmC subfamily.

It catalyses the reaction uridine(747) in 23S rRNA + S-adenosyl-L-methionine = 5-methyluridine(747) in 23S rRNA + S-adenosyl-L-homocysteine + H(+). Catalyzes the formation of 5-methyl-uridine at position 747 (m5U747) in 23S rRNA. In Yersinia pseudotuberculosis serotype O:1b (strain IP 31758), this protein is 23S rRNA (uracil(747)-C(5))-methyltransferase RlmC.